The sequence spans 382 residues: MKRHLNMLREFSIPLISGVIVALVWANISPESYQHFDHDRNFGPFSFHFIVNDFFMVLFFGIAAAEITQSCLPGGDLYPLRKAVNPLLATIGGVVGPVLVYVVLNALMGDPSLLRGWGIPTATDIALAWLVASLVFGKRHPAISFLLLLAIADDAIGLAIIALFYPDPNLPAAPQWLVLVLSGMGAAALLRRGNAQSYWPYIILGGGLSWAGLFMAHLHPALALVFIVPFLPHPHREKKHLFEEDMRDLSPLASFEHEWKVMVDFGLFLFGLANAGVTFGSIGAATWLVLASLVIGKTGGIFFMGWLGRRLGYPLPSRVGGKELALVGLIAGIGLTVALFVAGEAFTDPARQGAAKMGALMSAGCAVLALAAGRIMNVKRIT.

The next 11 membrane-spanning stretches (helical) occupy residues 10–30, 45–65, 87–107, 116–136, 145–165, 170–190, 211–231, 252–272, 275–295, 326–346, and 353–373; these read EFSI…NISP, FSFH…IAAA, LLAT…LNAL, GWGI…SLVF, FLLL…ALFY, LPAA…AALL, AGLF…VPFL, LASF…LFGL, AGVT…SLVI, LVGL…GEAF, and GAAK…LAAG.

The protein belongs to the NhaA Na(+)/H(+) (TC 2.A.33) antiporter family.

The protein resides in the cell inner membrane. It carries out the reaction Na(+)(in) + 2 H(+)(out) = Na(+)(out) + 2 H(+)(in). Its function is as follows. Na(+)/H(+) antiporter that extrudes sodium in exchange for external protons. This chain is Na(+)/H(+) antiporter NhaA 1, found in Pelobacter propionicus (strain DSM 2379 / NBRC 103807 / OttBd1).